The following is a 332-amino-acid chain: Succinylglutamate desuccinylase (332 aa).

3 residues coordinate Zn(2+): H59, E62, and H151. The active site involves E215.

It belongs to the AspA/AstE family. Succinylglutamate desuccinylase subfamily. It depends on Zn(2+) as a cofactor.

It catalyses the reaction N-succinyl-L-glutamate + H2O = L-glutamate + succinate. Its pathway is amino-acid degradation; L-arginine degradation via AST pathway; L-glutamate and succinate from L-arginine: step 5/5. In terms of biological role, transforms N(2)-succinylglutamate into succinate and glutamate. This chain is Succinylglutamate desuccinylase, found in Pseudomonas aeruginosa (strain LESB58).